A 580-amino-acid chain; its full sequence is Long-chain-fatty-acid--AMP ligase FadD28 (580 aa).

The disordered stretch occupies residues 421-440 (SERTFGGKIVTPSPGTPEGP).

The protein belongs to the ATP-dependent AMP-binding enzyme family.

It catalyses the reaction holo-[mycocerosate synthase] + a long-chain fatty acid + ATP = a long-chain fatty acyl-[mycocerosate synthase] + AMP + diphosphate. It carries out the reaction a long-chain fatty acid + ATP + H(+) = a long-chain fatty acyl-AMP + diphosphate. The enzyme catalyses holo-[mycocerosate synthase] + a long-chain fatty acyl-AMP = a long-chain fatty acyl-[mycocerosate synthase] + AMP + H(+). It functions in the pathway lipid metabolism; fatty acid biosynthesis. In terms of biological role, involved in the biosynthesis of phthiocerol dimycocerosate (PDIM), a cell wall-associated lipid found only in pathogenic mycobacteria. Catalyzes the activation of long-chain fatty acids as acyl-adenylates (acyl-AMP), which are then transferred to the multifunctional polyketide synthase Mas for further chain extension. This is Long-chain-fatty-acid--AMP ligase FadD28 (fadD28) from Mycobacterium tuberculosis (strain CDC 1551 / Oshkosh).